The following is a 207-amino-acid chain: A disintegrin and metalloproteinase with thrombospondin motifs 5 (207 aa).

A Peptidase M12B domain is found at 1 to 74 (HAAFTVAHEI…GHGNCLLDLP (74 aa)). Zn(2+) is bound at residue H8. Residue E9 is part of the active site. Residues H12 and H18 each contribute to the Zn(2+) site. 5 cysteine pairs are disulfide-bonded: C24–C53, C95–C117, C106–C127, C112–C146, and C140–C151. The Disintegrin domain maps to 83–164 (ELPGQTYDAS…TKKKYYSTSS (82 aa)). N96 carries an N-linked (GlcNAc...) asparagine glycan. The TSP type-1 domain maps to 165 to 205 (HGNWGSWGSWGQCSRSCGGGVQFAYRHCNNPAPKNNGRYCT). C-linked (Man) tryptophan glycosylation is found at W168 and W171. S180 carries O-linked (Fuc...) serine glycosylation.

Requires Zn(2+) as cofactor. Post-translationally, the precursor is cleaved by furin and PCSK7 outside of the cell. In terms of processing, glycosylated. Can be O-fucosylated by POFUT2 on a serine or a threonine residue found within the consensus sequence C1-X(2)-(S/T)-C2-G of the TSP type-1 repeat domains where C1 and C2 are the first and second cysteine residue of the repeat, respectively. Fucosylated repeats can then be further glycosylated by the addition of a beta-1,3-glucose residue by the glucosyltransferase, B3GALTL. Fucosylation mediates the efficient secretion of ADAMTS family members. Can also be C-glycosylated with one or two mannose molecules on tryptophan residues within the consensus sequence W-X-X-W of the TPRs, and N-glycosylated. These other glycosylations can also facilitate secretion.

The protein localises to the secreted. It is found in the extracellular space. The protein resides in the extracellular matrix. Its function is as follows. Metalloproteinase that plays an important role in connective tissue organization, development, inflammation and cell migration. Extracellular matrix (ECM) degrading enzyme that shows proteolytic activity toward the hyalectan group of chondroitin sulfate proteoglycans (CSPGs) including ACAN, VCAN, BCAN and NCAN. Cleavage within the hyalectans occurs at Glu-Xaa recognition motifs. Plays a role in embryonic development, including limb and cardiac morphogenesis, and skeletal muscle development through its VCAN remodeling properties. Cleaves VCAN in the pericellular matrix surrounding myoblasts, facilitating myoblast contact and fusion which is required for skeletal muscle development and regeneration. Participates in the development of brown adipose tissue and browning of white adipose tissue. Plays an important role for T-lymphocyte migration from draining lymph nodes following viral infection. In Bos taurus (Bovine), this protein is A disintegrin and metalloproteinase with thrombospondin motifs 5 (ADAMTS5).